Here is a 371-residue protein sequence, read N- to C-terminus: Cytochrome b (371 aa).

A run of 4 helical transmembrane segments spans residues 25–45, 69–90, 105–125, and 170–190; these read FGSM…FLAV, WMMQ…YIHI, WMSG…GYVL, and FFAL…LHVI. His-75 and His-89 together coordinate heme b. Residues His-174 and His-188 each contribute to the heme b site. His-193 lines the a ubiquinone pocket. Helical transmembrane passes span 218–238, 280–300, 312–332, and 339–358; these read YKDL…VSFF, LGGA…PFTH, LSQL…WAAT, and FIII…ISTP.

This sequence belongs to the cytochrome b family. As to quaternary structure, the cytochrome bc1 complex contains 3 respiratory subunits (MT-CYB, CYC1 and UQCRFS1), 2 core proteins (UQCRC1 and UQCRC2) and probably 6 low-molecular weight proteins. Heme b is required as a cofactor.

The protein resides in the mitochondrion inner membrane. In terms of biological role, component of the ubiquinol-cytochrome c reductase complex (complex III or cytochrome b-c1 complex) that is part of the mitochondrial respiratory chain. The b-c1 complex mediates electron transfer from ubiquinol to cytochrome c. Contributes to the generation of a proton gradient across the mitochondrial membrane that is then used for ATP synthesis. This is Cytochrome b (MT-CYB) from Python sebae (African rock python).